Consider the following 427-residue polypeptide: 3-phosphoshikimate 1-carboxyvinyltransferase (427 aa).

Residues Lys-20, Ser-21, and Arg-25 each coordinate 3-phosphoshikimate. Residue Lys-20 participates in phosphoenolpyruvate binding. Phosphoenolpyruvate-binding residues include Gly-90 and Arg-118. The 3-phosphoshikimate site is built by Ser-163, Ser-164, Gln-165, Ser-191, Asp-309, and Lys-336. Gln-165 serves as a coordination point for phosphoenolpyruvate. The active-site Proton acceptor is Asp-309. Phosphoenolpyruvate-binding residues include Arg-340 and Arg-381.

It belongs to the EPSP synthase family. Monomer.

It is found in the cytoplasm. The enzyme catalyses 3-phosphoshikimate + phosphoenolpyruvate = 5-O-(1-carboxyvinyl)-3-phosphoshikimate + phosphate. Its pathway is metabolic intermediate biosynthesis; chorismate biosynthesis. Functionally, catalyzes the transfer of the enolpyruvyl moiety of phosphoenolpyruvate (PEP) to the 5-hydroxyl of shikimate-3-phosphate (S3P) to produce enolpyruvyl shikimate-3-phosphate and inorganic phosphate. The polypeptide is 3-phosphoshikimate 1-carboxyvinyltransferase (Methanococcoides burtonii (strain DSM 6242 / NBRC 107633 / OCM 468 / ACE-M)).